The sequence spans 55 residues: uncharacterized protein (55 aa).

This is an uncharacterized protein from Saccharomyces cerevisiae (strain ATCC 204508 / S288c) (Baker's yeast).